The following is a 341-amino-acid chain: Fructose-1,6-bisphosphatase, cytosolic (341 aa).

Residues glutamate 71, glutamate 100, aspartate 121, leucine 123, and aspartate 124 each contribute to the Mg(2+) site. Substrate-binding positions include 124-127 (DGCS), asparagine 215, tyrosine 247, tyrosine 267, and lysine 277. Glutamate 283 provides a ligand contact to Mg(2+).

It belongs to the FBPase class 1 family. Mg(2+) is required as a cofactor.

It is found in the cytoplasm. The enzyme catalyses beta-D-fructose 1,6-bisphosphate + H2O = beta-D-fructose 6-phosphate + phosphate. This is Fructose-1,6-bisphosphatase, cytosolic from Beta vulgaris (Sugar beet).